A 271-amino-acid chain; its full sequence is Troponin T, fast skeletal muscle (271 aa).

Residues 1–21 (MSDEEVEHVEEEYEEEEEAQE) are compositionally biased toward acidic residues. The interval 1 to 74 (MSDEEVEHVE…EKVDFDDIQK (74 aa)) is disordered. Residue S2 is modified to N-acetylserine. S2 carries the post-translational modification Phosphoserine. Composition is skewed to basic and acidic residues over residues 29–53 (EVHEVHEEVHEVHEPEEVQEEEKPR) and 62–74 (PEGEKVDFDDIQK). At S90 the chain carries Phosphoserine. Residues 113 to 155 (RAERAEQQRIRAEKERERQNRLAEEKARREEEEAKRRAEDDLK) show a composition bias toward basic and acidic residues. The disordered stretch occupies residues 113-192 (RAERAEQQRI…TAREMKKKVL (80 aa)). S161, S168, and S169 each carry phosphoserine. The span at 183–192 (TAREMKKKVL) shows a compositional bias: basic and acidic residues. At S205 the chain carries Phosphoserine. Position 221 is a phosphotyrosine (Y221). Residues 249-271 (DQAQKHSKKAGTTPKGKVGGRWK) are disordered.

Belongs to the troponin T family.

In terms of biological role, troponin T is the tropomyosin-binding subunit of troponin, the thin filament regulatory complex which confers calcium-sensitivity to striated muscle actomyosin ATPase activity. This chain is Troponin T, fast skeletal muscle (TNNT3), found in Sus scrofa (Pig).